We begin with the raw amino-acid sequence, 1086 residues long: Transcription initiation factor TFIID subunit 2 (1086 aa).

A compositionally biased stretch (polar residues) spans 1 to 11; the sequence is MDFSEASTSGD. 2 disordered regions span residues 1–53 and 1064–1086; these read MDFS…PPPV and GYEA…NLMQ. Pro residues-rich tracts occupy residues 19–36 and 44–53; these read PFPP…PPLA and APPPLQPPPV. Residues 1067-1078 show a composition bias toward basic and acidic residues; that stretch reads AARRSPPRRDFG.

It belongs to the TAF2 family. Component of the TFIID basal transcription factor complex, composed of TATA-box-binding protein tbp-1, and a number of TBP-associated factors (TAFs).

Its subcellular location is the nucleus. In terms of biological role, the TFIID basal transcription factor complex plays a major role in the initiation of RNA polymerase II (Pol II)-dependent transcription. TFIID recognizes and binds promoters via its subunit tbp-1, a TATA-box-binding protein, and promotes assembly of the pre-initiation complex (PIC). The TFIID complex consists of tbp-1 and TBP-associated factors (TAFs), including taf-2. May regulate RNA polymerase II activity and thereby may control transcription initiation by RNA polymerase II. The polypeptide is Transcription initiation factor TFIID subunit 2 (Caenorhabditis elegans).